A 526-amino-acid chain; its full sequence is Thymocyte selection-associated high mobility group box protein TOX (526 aa).

Disordered stretches follow at residues 138 to 178 and 192 to 264; these read MPDI…PHGQ and GLNM…PQKP. Over residues 192-203 the composition is skewed to polar residues; sequence GLNMGGSNVPHN. The span at 209–220 shows a compositional bias: low complexity; sequence GSKSATPSPSSS. Residues 228–245 are compositionally biased toward basic and acidic residues; that stretch reads DTSKINGGEKRPASDMGK. The short motif at 237–256 is the Nuclear localization signal element; the sequence is KRPASDMGKKPKTPKKKKKK. Positions 246–256 are enriched in basic residues; it reads KPKTPKKKKKK. A DNA-binding region (HMG box) is located at residues 261–329; sequence PQKPVSAYAL…EYLKQLAAYR (69 aa).

It belongs to the high motility group (HMG) box superfamily. As to quaternary structure, interacts with HBO1 complex composed at least of KAT7/HBO1, ING4, MEAF6, and JADE2; this complex is involved in histone acetylation. Interacts with DNMT1, LEO1, PAF1, SAP130 and SIN3A; these interactors regulate chromatin remodeling. Interacts with an array of proteins involved in RNA processing and translation and DNA replication. In terms of tissue distribution, expressed in NK cells. Highly expressed in tumor-infiltrating CD8-positive T cells (at protein level).

The protein localises to the nucleus. In terms of biological role, transcriptional regulator with a major role in neural stem cell commitment and corticogenesis as well as in lymphoid cell development and lymphoid tissue organogenesis. Binds to GC-rich DNA sequences in the proximity of transcription start sites and may alter chromatin structure, modifying access of transcription factors to DNA. During cortical development, controls the neural stem cell pool by inhibiting the switch from proliferative to differentiating progenitors. Beyond progenitor cells, promotes neurite outgrowth in newborn neurons migrating to reach the cortical plate. May activate or repress critical genes for neural stem cell fate such as SOX2, EOMES and ROBO2. Plays an essential role in the development of lymphoid tissue-inducer (LTi) cells, a subset necessary for the formation of secondary lymphoid organs: peripheral lymph nodes and Peyer's patches. Acts as a developmental checkpoint and regulates thymocyte positive selection toward T cell lineage commitment. Required for the development of various T cell subsets, including CD4-positive helper T cells, CD8-positive cytotoxic T cells, regulatory T cells and CD1D-dependent natural killer T (NKT) cells. Required for the differentiation of common lymphoid progenitors (CMP) to innate lymphoid cells (ILC). May regulate the NOTCH-mediated gene program, promoting differentiation of the ILC lineage. Required at the progenitor phase of NK cell development in the bone marrow to specify NK cell lineage commitment. Upon chronic antigen stimulation, diverts T cell development by promoting the generation of exhaustive T cells, while suppressing effector and memory T cell programming. May regulate the expression of genes encoding inhibitory receptors such as PDCD1 and induce the exhaustion program, to prevent the overstimulation of T cells and activation-induced cell death. This Homo sapiens (Human) protein is Thymocyte selection-associated high mobility group box protein TOX.